Reading from the N-terminus, the 279-residue chain is Large ribosomal subunit protein uL2 (279 aa).

Disordered regions lie at residues 1-59 and 224-279; these read MGIR…GGHK and VAMN…KNKR. Basic residues predominate over residues 50-59; the sequence is TTRHKGGGHK. Residues 253–268 show a composition bias toward basic and acidic residues; that stretch reads REGRTRRPNKESDKLI. Residues 269-279 show a composition bias toward basic residues; that stretch reads VRRRRTGKNKR.

Belongs to the universal ribosomal protein uL2 family. In terms of assembly, part of the 50S ribosomal subunit. Forms a bridge to the 30S subunit in the 70S ribosome.

One of the primary rRNA binding proteins. Required for association of the 30S and 50S subunits to form the 70S ribosome, for tRNA binding and peptide bond formation. It has been suggested to have peptidyltransferase activity; this is somewhat controversial. Makes several contacts with the 16S rRNA in the 70S ribosome. The sequence is that of Large ribosomal subunit protein uL2 from Pseudarthrobacter chlorophenolicus (strain ATCC 700700 / DSM 12829 / CIP 107037 / JCM 12360 / KCTC 9906 / NCIMB 13794 / A6) (Arthrobacter chlorophenolicus).